A 973-amino-acid polypeptide reads, in one-letter code: Sodium/calcium exchanger 1 (973 aa).

The N-terminal stretch at 1-35 (MYNMRRLSLSPTFSMGFHLLVTVSLLFSHVDHVIA) is a signal peptide. Topologically, residues 36–74 (ETEMEGEGNETGECTGSYYCKKGVILPIWEPQDPSFGDK) are extracellular. The N-linked (GlcNAc...) asparagine glycan is linked to Asn44. The helical transmembrane segment at 75 to 95 (IARATVYFVAMVYMFLGVSII) threads the bilayer. The Cytoplasmic portion of the chain corresponds to 96–136 (ADRFMSSIEVITSQEKEITIKKPNGETTKTTVRIWNETVSN). The helical transmembrane segment at 137 to 157 (LTLMALGSSAPEILLSVIEVC) threads the bilayer. One copy of the Alpha-1 repeat lies at 141-181 (ALGSSAPEILLSVIEVCGHNFTAGDLGPSTIVGSAAFNMFI). The Extracellular segment spans residues 158 to 170 (GHNFTAGDLGPST). An N-linked (GlcNAc...) asparagine glycan is attached at Asn160. A helical membrane pass occupies residues 171–191 (IVGSAAFNMFIIIALCVYVVP). Over 192 to 204 (DGETRKIKHLRVF) the chain is Cytoplasmic. Residues 205 to 225 (FVTAAWSIFAYTWLYIILSVI) form a helical membrane-spanning segment. Topologically, residues 226-231 (SPGVVE) are extracellular. Residues 232-252 (VWEGLLTFFFFPICVVFAWVA) traverse the membrane as a helical segment. The Cytoplasmic segment spans residues 253-800 (DRRLLFYKYV…FVPPTEYWNG (548 aa)). A putative calmodulin-binding region region spans residues 254–273 (RRLLFYKYVYKRYRAGKQRG). Ser285 and Ser392 each carry phosphoserine. 2 consecutive Calx-beta domains span residues 396–496 (VNTE…VHLS) and 527–627 (ATVT…LEIG). Residues Glu420, Asp456, Asp481, Asp482, Ile484, Glu486, Glu489, Asp533, Asp534, Asp535, Glu551, Asp587, Asp613, Glu614, Glu615, and Glu718 each coordinate Ca(2+). A helical membrane pass occupies residues 801-821 (WACFIVSILMIGLLTAFIGDL). Over 822-824 (ASH) the chain is Extracellular. Residues 825–845 (FGCTIGLKDSVTAVVFVALGT) traverse the membrane as a helical segment. One copy of the Alpha-2 repeat lies at 842–878 (ALGTSVPDTFASKVAATQDQYADASIGNVTGSNAVNV). The Cytoplasmic portion of the chain corresponds to 846–874 (SVPDTFASKVAATQDQYADASIGNVTGSN). The chain crosses the membrane as a helical span at residues 875-895 (AVNVFLGIGVAWSIAAIYHAA). Residues 896 to 906 (NGEQFKVSPGT) are Extracellular-facing. The chain crosses the membrane as a helical span at residues 907–927 (LAFSVTLFTIFAFINVGVLLY). Over 928–944 (RRRPEIGGELGGPRTAK) the chain is Cytoplasmic. A helical transmembrane segment spans residues 945-965 (LLTSCLFVLLWLLYIFFSSLE). The Extracellular segment spans residues 966 to 973 (AYCHIKGF).

This sequence belongs to the Ca(2+):cation antiporter (CaCA) (TC 2.A.19) family. SLC8 subfamily. In terms of tissue distribution, detected primarily in heart and at lower levels in brain. Expressed in cardiac sarcolemma, brain, kidney, liver, pancreas, skeletal muscle, placenta and lung.

The protein resides in the cell membrane. The catalysed reaction is Ca(2+)(in) + 3 Na(+)(out) = Ca(2+)(out) + 3 Na(+)(in). Its activity is regulated as follows. Activated by micromolar levels of Ca(2+). Mediates the exchange of one Ca(2+) ion against three to four Na(+) ions across the cell membrane, and thereby contributes to the regulation of cytoplasmic Ca(2+) levels and Ca(2+)-dependent cellular processes. Contributes to Ca(2+) transport during excitation-contraction coupling in muscle. In a first phase, voltage-gated channels mediate the rapid increase of cytoplasmic Ca(2+) levels due to release of Ca(2+) stores from the endoplasmic reticulum. SLC8A1 mediates the export of Ca(2+) from the cell during the next phase, so that cytoplasmic Ca(2+) levels rapidly return to baseline. Required for normal embryonic heart development and the onset of heart contractions. The protein is Sodium/calcium exchanger 1 (SLC8A1) of Homo sapiens (Human).